A 25-amino-acid polypeptide reads, in one-letter code: Caerin-1.5 (25 aa).

Leu25 carries the leucine amide modification.

Expressed by the skin parotoid and/or rostral glands.

It is found in the secreted. In terms of biological role, antibacterial peptide, that adopts an alpha helical conformation which can disrupt bacterial membranes. Each caerin displays a different antimicrobial specificity. This is Caerin-1.5 from Ranoidea caerulea (Green tree frog).